Consider the following 656-residue polypeptide: Chaperone protein HtpG (656 aa).

The segment at 1–359 is a; substrate-binding; it reads MSAQVEQLEF…AEDMSLNVSR (359 aa). The b stretch occupies residues 360-575; that stretch reads EILQQNRQIN…AFGITPALAR (216 aa). Residues 576 to 656 are c; it reads IYRASGQDVP…LLADLLSRSM (81 aa).

This sequence belongs to the heat shock protein 90 family. As to quaternary structure, homodimer.

The protein localises to the cytoplasm. Its function is as follows. Molecular chaperone. Has ATPase activity. The polypeptide is Chaperone protein HtpG (Mycobacterium leprae (strain TN)).